We begin with the raw amino-acid sequence, 244 residues long: 14-3-3 protein beta/alpha-A (244 aa).

Residue methionine 1 is modified to N-acetylmethionine.

This sequence belongs to the 14-3-3 family. In terms of assembly, homodimer, and heterodimer with other family members.

Its subcellular location is the cytoplasm. Functionally, adapter protein implicated in the regulation of a large spectrum of both general and specialized signaling pathways. Binds to a large number of partners, usually by recognition of a phosphoserine or phosphothreonine motif. Binding generally results in the modulation of the activity of the binding partner. The polypeptide is 14-3-3 protein beta/alpha-A (ywhab-a) (Xenopus laevis (African clawed frog)).